The chain runs to 192 residues: MCKDTYFSGEAIQLSDMLRAREERALRQLHLLKEYPEGSLLSVTMNIPGPIKTSPKLLEVFDIVIKAIQTALADDKICYQLRLLPTTGYEYYLITSLPSRDLKLKMIALETELPIGRLMDLDVLVLQNDLPHSISRTVLGGSPRQCFICSKEAKVCGRLRKHSVEEMQTAISKLLHSFFNKDNQSSSSDKTG.

Belongs to the CitX family.

The enzyme catalyses apo-[citrate lyase ACP] + 2'-(5''-triphospho-alpha-D-ribosyl)-3'-dephospho-CoA = holo-[citrate lyase ACP] + diphosphate. In terms of biological role, transfers 2-(5''-triphosphoribosyl)-3'-dephosphocoenzyme-A on a serine residue to the apo-acyl carrier protein (gamma chain) of the citrate lyase to yield holo-acyl carrier protein. This is Probable apo-citrate lyase phosphoribosyl-dephospho-CoA transferase from Streptococcus pyogenes serotype M3 (strain ATCC BAA-595 / MGAS315).